The primary structure comprises 62 residues: Large ribosomal subunit protein uL30 (62 aa).

It belongs to the universal ribosomal protein uL30 family. As to quaternary structure, part of the 50S ribosomal subunit.

This Heliobacterium modesticaldum (strain ATCC 51547 / Ice1) protein is Large ribosomal subunit protein uL30.